A 285-amino-acid chain; its full sequence is Lipoyl synthase (285 aa).

[4Fe-4S] cluster is bound by residues C36, C41, C47, C62, C66, C69, and S275. The Radical SAM core domain occupies 48–264 (FSKKTATFLI…KEYAISIGFK (217 aa)).

It belongs to the radical SAM superfamily. Lipoyl synthase family. Requires [4Fe-4S] cluster as cofactor.

Its subcellular location is the cytoplasm. It carries out the reaction [[Fe-S] cluster scaffold protein carrying a second [4Fe-4S](2+) cluster] + N(6)-octanoyl-L-lysyl-[protein] + 2 oxidized [2Fe-2S]-[ferredoxin] + 2 S-adenosyl-L-methionine + 4 H(+) = [[Fe-S] cluster scaffold protein] + N(6)-[(R)-dihydrolipoyl]-L-lysyl-[protein] + 4 Fe(3+) + 2 hydrogen sulfide + 2 5'-deoxyadenosine + 2 L-methionine + 2 reduced [2Fe-2S]-[ferredoxin]. The protein operates within protein modification; protein lipoylation via endogenous pathway; protein N(6)-(lipoyl)lysine from octanoyl-[acyl-carrier-protein]: step 2/2. Functionally, catalyzes the radical-mediated insertion of two sulfur atoms into the C-6 and C-8 positions of the octanoyl moiety bound to the lipoyl domains of lipoate-dependent enzymes, thereby converting the octanoylated domains into lipoylated derivatives. The protein is Lipoyl synthase of Caldicellulosiruptor saccharolyticus (strain ATCC 43494 / DSM 8903 / Tp8T 6331).